Reading from the N-terminus, the 388-residue chain is Xylose isomerase (388 aa).

Residues His-54 and Asp-57 contribute to the active site. Mg(2+) is bound by residues Glu-181, Glu-217, His-220, Asp-245, Asp-255, Asp-257, and Asp-287.

Belongs to the xylose isomerase family. As to quaternary structure, homotetramer. Mg(2+) serves as cofactor.

It is found in the cytoplasm. The enzyme catalyses alpha-D-xylose = alpha-D-xylulofuranose. The sequence is that of Xylose isomerase from Streptomyces olivaceoviridis (Streptomyces corchorusii).